Here is a 218-residue protein sequence, read N- to C-terminus: OPA3-like protein (218 aa).

The stretch at 129-179 (NEIMEKQFVLQKKKNELQSSTEEIDSTEKDFDELHKVILKVERELHTLRQN) forms a coiled coil. The disordered stretch occupies residues 175 to 218 (TLRQNTPSQNEQAEATPSKEIPRETVSEKADHPPSSNTKSVSTG). Residues 176–189 (LRQNTPSQNEQAEA) are compositionally biased toward polar residues. Positions 194 to 206 (EIPRETVSEKADH) are enriched in basic and acidic residues. Residues 208 to 218 (PSSNTKSVSTG) are compositionally biased toward polar residues.

This sequence belongs to the OPA3 family.

The polypeptide is OPA3-like protein (Schizosaccharomyces pombe (strain 972 / ATCC 24843) (Fission yeast)).